The primary structure comprises 396 residues: ATP synthase subunit beta, chloroplastic (396 aa).

Glycine 74–threonine 81 contacts ATP.

Belongs to the ATPase alpha/beta chains family. In terms of assembly, F-type ATPases have 2 components, CF(1) - the catalytic core - and CF(0) - the membrane proton channel. CF(1) has five subunits: alpha(3), beta(3), gamma(1), delta(1), epsilon(1). CF(0) has four main subunits: a(1), b(1), b'(1) and c(9-12).

It is found in the plastid. The protein resides in the chloroplast thylakoid membrane. It catalyses the reaction ATP + H2O + 4 H(+)(in) = ADP + phosphate + 5 H(+)(out). In terms of biological role, produces ATP from ADP in the presence of a proton gradient across the membrane. The catalytic sites are hosted primarily by the beta subunits. The chain is ATP synthase subunit beta, chloroplastic from Adiantum raddianum (Maidenhair fern).